We begin with the raw amino-acid sequence, 760 residues long: Penicillin-binding protein 1B (760 aa).

Residues 1–8 lie on the Cytoplasmic side of the membrane; that stretch reads MFFNFKKY. Residues 9-29 traverse the membrane as a helical; Signal-anchor for type II membrane protein segment; it reads FLIKVFFFVLILTLCYGLYLY. Topologically, residues 30-760 are extracellular; that stretch reads VKINRFINGK…NFLFWLKNLF (731 aa). Residues 136-308 form a transglycosylase region; the sequence is FRLEPKLIAM…SLYSPWTNPN (173 aa). E174 serves as the catalytic Proton donor; for transglycosylase activity. Residues 392 to 684 are transpeptidase; that stretch reads EQAVKIEIPI…SSGAMQIYKR (293 aa). The active-site Acyl-ester intermediate; for transpeptidase activity is S451.

This sequence in the N-terminal section; belongs to the glycosyltransferase 51 family. It in the C-terminal section; belongs to the transpeptidase family.

It is found in the cell membrane. The catalysed reaction is [GlcNAc-(1-&gt;4)-Mur2Ac(oyl-L-Ala-gamma-D-Glu-L-Lys-D-Ala-D-Ala)](n)-di-trans,octa-cis-undecaprenyl diphosphate + beta-D-GlcNAc-(1-&gt;4)-Mur2Ac(oyl-L-Ala-gamma-D-Glu-L-Lys-D-Ala-D-Ala)-di-trans,octa-cis-undecaprenyl diphosphate = [GlcNAc-(1-&gt;4)-Mur2Ac(oyl-L-Ala-gamma-D-Glu-L-Lys-D-Ala-D-Ala)](n+1)-di-trans,octa-cis-undecaprenyl diphosphate + di-trans,octa-cis-undecaprenyl diphosphate + H(+). The enzyme catalyses Preferential cleavage: (Ac)2-L-Lys-D-Ala-|-D-Ala. Also transpeptidation of peptidyl-alanyl moieties that are N-acyl substituents of D-alanine.. It functions in the pathway cell wall biogenesis; peptidoglycan biosynthesis. Functionally, cell wall formation. Synthesis of cross-linked peptidoglycan from the lipid intermediates. The enzyme has a penicillin-insensitive transglycosylase N-terminal domain (formation of linear glycan strands) and a penicillin-sensitive transpeptidase C-terminal domain (cross-linking of the peptide subunits). The chain is Penicillin-binding protein 1B (mrcB) from Buchnera aphidicola subsp. Acyrthosiphon pisum (strain APS) (Acyrthosiphon pisum symbiotic bacterium).